Here is a 214-residue protein sequence, read N- to C-terminus: Germin-like protein 9-3 (214 aa).

An N-terminal signal peptide occupies residues methionine 1 to alanine 23. Residues asparagine 42, asparagine 60, and asparagine 69 are each glycosylated (N-linked (GlcNAc...) asparagine). Positions methionine 59 to glutamine 202 constitute a Cupin type-1 domain. Positions 104, 106, 111, and 150 each coordinate Mn(2+).

The protein belongs to the germin family. Oligomer (believed to be a pentamer but probably hexamer).

It localises to the secreted. The protein resides in the extracellular space. The protein localises to the apoplast. Its function is as follows. May play a role in plant defense. Probably has no oxalate oxidase activity even if the active site is conserved. In Oryza sativa subsp. japonica (Rice), this protein is Germin-like protein 9-3.